Consider the following 23-residue polypeptide: NADP phosphatase 2 (23 aa).

In terms of assembly, homodimer.

The protein localises to the cytoplasm. The sequence is that of NADP phosphatase 2 from Arthrobacter sp. (strain KM).